A 112-amino-acid polypeptide reads, in one-letter code: 2Fe-2S ferredoxin (112 aa).

One can recognise a 2Fe-2S ferredoxin-type domain in the interval 1–104 (MPQIVILPHA…DLVVEIPKYT (104 aa)). [2Fe-2S] cluster is bound by residues C42, C48, C51, and C87.

It belongs to the adrenodoxin/putidaredoxin family. [2Fe-2S] cluster serves as cofactor.

In terms of biological role, ferredoxin are iron-sulfur proteins that transfer electrons in a wide variety of metabolic reactions. This is 2Fe-2S ferredoxin (fdx) from Pseudomonas aeruginosa (strain ATCC 15692 / DSM 22644 / CIP 104116 / JCM 14847 / LMG 12228 / 1C / PRS 101 / PAO1).